A 364-amino-acid polypeptide reads, in one-letter code: Mitoferrin-2 (364 aa).

A compositionally biased stretch (gly residues) spans Met-1–Ala-17. Disordered stretches follow at residues Met-1–Leu-28 and Gly-40–Gly-60. Positions Gly-18 to Ala-27 are enriched in low complexity. Solcar repeat units lie at residues Ala-70–Thr-158, Asn-168–His-252, and Tyr-259–Leu-352. 6 consecutive transmembrane segments (helical) span residues Val-72 to Tyr-91, Gly-133 to Tyr-152, His-170 to Asn-189, Ser-227 to Tyr-246, Pro-261 to Thr-280, and Gly-327 to Tyr-346.

This sequence belongs to the mitochondrial carrier (TC 2.A.29) family. Ubiquitous. Expressed in placenta, lung, kidney, pancreas, liver, brain, skeletal muscle and heart.

The protein localises to the mitochondrion inner membrane. It carries out the reaction Fe(2+)(in) = Fe(2+)(out). Functionally, mitochondrial iron transporter that mediates iron uptake. Probably required for heme synthesis of hemoproteins and Fe-S cluster assembly in non-erythroid cells. This is Mitoferrin-2 (SLC25A28) from Homo sapiens (Human).